The chain runs to 252 residues: Ribosomal RNA small subunit methyltransferase J (252 aa).

Residues 101–102 (RD), 117–118 (ER), 153–154 (SS), and aspartate 171 each bind S-adenosyl-L-methionine.

This sequence belongs to the methyltransferase superfamily. RsmJ family.

The protein localises to the cytoplasm. The catalysed reaction is guanosine(1516) in 16S rRNA + S-adenosyl-L-methionine = N(2)-methylguanosine(1516) in 16S rRNA + S-adenosyl-L-homocysteine + H(+). Specifically methylates the guanosine in position 1516 of 16S rRNA. This is Ribosomal RNA small subunit methyltransferase J from Citrobacter koseri (strain ATCC BAA-895 / CDC 4225-83 / SGSC4696).